A 61-amino-acid polypeptide reads, in one-letter code: Large ribosomal subunit protein bL32c (61 aa).

A disordered region spans residues 37–61 (SRSFSSGNEHPKPKGFSGQQQQTNK).

This sequence belongs to the bacterial ribosomal protein bL32 family.

It localises to the plastid. The protein localises to the chloroplast. This chain is Large ribosomal subunit protein bL32c, found in Agrostis stolonifera (Creeping bentgrass).